The primary structure comprises 138 residues: Translation initiation factor 2 subunit beta (138 aa).

The protein belongs to the eIF-2-beta/eIF-5 family. As to quaternary structure, heterotrimer composed of an alpha, a beta and a gamma chain.

EIF-2 functions in the early steps of protein synthesis by forming a ternary complex with GTP and initiator tRNA. The chain is Translation initiation factor 2 subunit beta from Methanococcus maripaludis (strain C5 / ATCC BAA-1333).